Consider the following 344-residue polypeptide: tRNA N6-adenosine threonylcarbamoyltransferase (344 aa).

Positions 111 and 115 each coordinate Fe cation. Substrate is bound by residues 134 to 138, D167, G180, and N273; that span reads LVSGG. D301 contributes to the Fe cation binding site.

The protein belongs to the KAE1 / TsaD family. Fe(2+) serves as cofactor.

Its subcellular location is the cytoplasm. The enzyme catalyses L-threonylcarbamoyladenylate + adenosine(37) in tRNA = N(6)-L-threonylcarbamoyladenosine(37) in tRNA + AMP + H(+). In terms of biological role, required for the formation of a threonylcarbamoyl group on adenosine at position 37 (t(6)A37) in tRNAs that read codons beginning with adenine. Is involved in the transfer of the threonylcarbamoyl moiety of threonylcarbamoyl-AMP (TC-AMP) to the N6 group of A37, together with TsaE and TsaB. TsaD likely plays a direct catalytic role in this reaction. The polypeptide is tRNA N6-adenosine threonylcarbamoyltransferase (Cupriavidus taiwanensis (strain DSM 17343 / BCRC 17206 / CCUG 44338 / CIP 107171 / LMG 19424 / R1) (Ralstonia taiwanensis (strain LMG 19424))).